The following is an 825-amino-acid chain: Glycerol-3-phosphate acyltransferase 1, mitochondrial (825 aa).

The Cytoplasmic segment spans residues 1–87; it reads MDESALTLGT…FFNPSIPSLG (87 aa). Positions 80–120 are important for mitochondrial localization; sequence NPSIPSLGLRNVIYINETHTRHRGWLARRLSYVLFIQERDV. An intramembrane segment occupies 88-118; the sequence is LRNVIYINETHTRHRGWLARRLSYVLFIQER. At 119 to 825 the chain is on the cytoplasmic side; it reads DVHKGMFATN…LEYILSLVVL (707 aa). The HXXXXD motif signature appears at 230–235; that stretch reads HRSHID. CoA is bound by residues Arg-278, Arg-279, Lys-288, Arg-293, and Arg-328. Ser-380 bears the Phosphoserine mark. The disordered stretch occupies residues 435–455; the sequence is SRPSGAADEGTDMSINESRNA. A CoA-binding site is contributed by Arg-461. Phosphoserine occurs at positions 685 and 692. An N6-acetyllysine mark is found at Lys-777 and Lys-781.

The protein belongs to the GPAT/DAPAT family. In terms of tissue distribution, highly expressed in adipose tissues and lung. Low expression in liver.

The protein localises to the mitochondrion outer membrane. The enzyme catalyses sn-glycerol 3-phosphate + an acyl-CoA = a 1-acyl-sn-glycero-3-phosphate + CoA. It carries out the reaction (9Z,12Z)-octadecadienoyl-CoA + sn-glycerol 3-phosphate = 1-(9Z,12Z)-octadecadienoyl-sn-glycero-3-phosphate + CoA. It catalyses the reaction sn-glycerol 3-phosphate + (9Z)-octadecenoyl-CoA = 1-(9Z-octadecenoyl)-sn-glycero-3-phosphate + CoA. The catalysed reaction is sn-glycerol 3-phosphate + octadecanoyl-CoA = 1-octadecanoyl-sn-glycero-3-phosphate + CoA. The enzyme catalyses sn-glycerol 3-phosphate + hexadecanoyl-CoA = 1-hexadecanoyl-sn-glycero-3-phosphate + CoA. It carries out the reaction dodecanoyl-CoA + sn-glycerol 3-phosphate = 1-dodecanoyl-sn-glycerol 3-phosphate + CoA. It catalyses the reaction 1-acyl-sn-glycero-3-phospho-(1'-sn-glycerol) + an acyl-CoA = a 1,2-diacyl-sn-glycero-3-phospho-(1'-sn-glycerol) + CoA. Its pathway is phospholipid metabolism; CDP-diacylglycerol biosynthesis; CDP-diacylglycerol from sn-glycerol 3-phosphate: step 1/3. Functionally, mitochondrial membrane protein that catalyzes the essential first step of biosynthesis of glycerolipids such as triglycerides, phosphatidic acids and lysophosphatidic acids. Esterifies acyl-group from acyl-coenzyme A (acyl-CoA) to the sn-1 position of glycerol-3-phosphate, to produce lysophosphatidic acid. Has a narrow hydrophobic binding cleft that selects for a linear acyl chain. Catalytic activity is higher for substrates with a 16-carbon acyl chain. In Bos taurus (Bovine), this protein is Glycerol-3-phosphate acyltransferase 1, mitochondrial.